The sequence spans 461 residues: Carbamoyl phosphate synthase arginine-specific small chain (461 aa).

The Glutamine amidotransferase type-1 domain maps to 240–427 (HVALIDCGVK…LENVQMYKDN (188 aa)). Cys316 serves as the catalytic Nucleophile. Residues His400 and Glu402 contribute to the active site.

The protein belongs to the CarA family. In terms of assembly, heterodimer composed of 2 chains; the small (or glutamine) chain promotes the hydrolysis of glutamine to ammonia, which is used by the large (or ammonia) chain to synthesize carbamoyl phosphate.

The protein resides in the cytoplasm. The catalysed reaction is hydrogencarbonate + L-glutamine + 2 ATP + H2O = carbamoyl phosphate + L-glutamate + 2 ADP + phosphate + 2 H(+). It carries out the reaction L-glutamine + H2O = L-glutamate + NH4(+). It functions in the pathway amino-acid biosynthesis; L-arginine biosynthesis; carbamoyl phosphate from bicarbonate: step 1/1. Functionally, small subunit of the arginine-specific carbamoyl phosphate synthase (CPSase). CPSase catalyzes the formation of carbamoyl phosphate from the ammonia moiety of glutamine, carbonate, and phosphate donated by ATP, constituting the first step of 2 biosynthetic pathways, one leading to arginine and/or urea and the other to pyrimidine nucleotides. The small subunit (glutamine amidotransferase) binds and cleaves glutamine to supply the large subunit with the substrate ammonia. The protein is Carbamoyl phosphate synthase arginine-specific small chain (CPA1) of Chaetomium globosum (strain ATCC 6205 / CBS 148.51 / DSM 1962 / NBRC 6347 / NRRL 1970) (Soil fungus).